We begin with the raw amino-acid sequence, 532 residues long: FRIGIDA-like protein 4a (532 aa).

Residues 406 to 432 are disordered; the sequence is KTEKRKPAAVPANKRTRASYNGPMPPA.

Belongs to the Frigida family. Expressed in leaves, shoot apex, flowers and during seed development.

The polypeptide is FRIGIDA-like protein 4a (FRL4A) (Arabidopsis thaliana (Mouse-ear cress)).